We begin with the raw amino-acid sequence, 166 residues long: Large ribosomal subunit protein uL11 (166 aa).

This sequence belongs to the universal ribosomal protein uL11 family.

This chain is Large ribosomal subunit protein uL11 (rpl12), found in Dictyostelium discoideum (Social amoeba).